Consider the following 1052-residue polypeptide: Focal adhesion kinase 1 (1052 aa).

The disordered stretch occupies residues 1-27 (MAAAYLDPNLNHTPNSSTKTHLGTGME). Ala2 carries the post-translational modification N-acetylalanine. Tyr5 carries the phosphotyrosine modification. The span at 10–21 (LNHTPNSSTKTH) shows a compositional bias: polar residues. Position 13 is a phosphothreonine (Thr13). Ser29 and Ser54 each carry phosphoserine. Residues 35–355 (RVLKVFHYFE…GYCRLVNGTS (321 aa)) form the FERM domain. A Glycyl lysine isopeptide (Lys-Gly) (interchain with G-Cter in SUMO) cross-link involves residue Lys152. Tyr397 carries the post-translational modification Phosphotyrosine; by autocatalysis. Tyr407 is subject to Phosphotyrosine. A Protein kinase domain is found at 422–680 (IELGRCIGEG…ELKAQLSTIL (259 aa)). Residues 428-434 (IGEGQFG), Lys454, and 500-502 (ELC) each bind ATP. Asp546 (proton acceptor) is an active-site residue. Tyr570 is subject to Phosphotyrosine. A phosphotyrosine; by RET and SRC mark is found at Tyr576 and Tyr577. Ser580 carries the post-translational modification Phosphoserine. Basic and acidic residues predominate over residues 684 to 697 (KAQQEERMRMESRR). Disordered regions lie at residues 684–734 (KAQQ…PSPQ) and 839–922 (LSRG…RSND). Residues 707-1052 (GSDEAPPKPS…LKMLGQTRPH (346 aa)) are interaction with TGFB1I1. Ser722 carries the post-translational modification Phosphoserine. Position 732 is a phosphoserine; by CDK5 (Ser732). Over residues 839–849 (LSRGSIDREDG) the composition is skewed to basic and acidic residues. Ser843 is subject to Phosphoserine. Tyr861 carries the phosphotyrosine modification. Pro residues predominate over residues 869 to 880 (PAAPPKKPPRPG). 2 positions are modified to phosphoserine: Ser887 and Ser910. The interval 912–1052 (PPTANLDRSN…LKMLGQTRPH (141 aa)) is interaction with ARHGEF28. Thr914 bears the Phosphothreonine mark. Tyr925 carries the phosphotyrosine modification.

This sequence belongs to the protein kinase superfamily. Tyr protein kinase family. FAK subfamily. In terms of assembly, interacts (via first Pro-rich region) with CAS family members (via SH3 domain), including BCAR1, BCAR3, and CASS4. Interacts with NEDD9 (via SH3 domain). Interacts with GIT1. Interacts with SORBS1. Interacts with ARHGEF28. Interacts with SHB. Part of a complex composed of THSD1, PTK2/FAK1, TLN1 and VCL. Interacts with PXN and TLN1. Interacts with STAT1. Interacts with DCC. Interacts with WASL. Interacts with ARHGEF7. Interacts with GRB2 and GRB7. Component of a complex that contains at least FER, CTTN and PTK2/FAK1. Interacts with BMX. Interacts with TGFB1I1. Interacts with STEAP4. Interacts with ZFYVE21. Interacts with ESR1. Interacts with PIK3R1 or PIK3R2. Interacts with SRC, FGR, FLT4 and RET. Interacts with EPHA2 in resting cells; activation of EPHA2 recruits PTPN11, leading to dephosphorylation of PTK2/FAK1 and dissociation of the complex. Interacts with EPHA1 (kinase activity-dependent). Interacts with CD4; this interaction requires the presence of HIV-1 gp120. Interacts with PIAS1. Interacts with ARHGAP26 and SHC1. Interacts with RB1CC1; this inhibits PTK2/FAK1 activity and activation of downstream signaling pathways. Interacts with P53/TP53 and MDM2. Interacts with LPXN (via LD motif 3). Interacts with MISP. Interacts with CIB1 isoform 2. Interacts with CD36. Interacts with EMP2; regulates PTK2 activation and localization. Interacts with DSCAM. Interacts with AMBRA1. Interacts (when tyrosine-phosphorylated) with tensin TNS1; the interaction is increased by phosphorylation of TNS1. Phosphorylated on tyrosine residues upon activation, e.g. upon integrin signaling. Tyr-397 is the major autophosphorylation site, but other kinases can also phosphorylate this residue. Phosphorylation at Tyr-397 promotes interaction with SRC and SRC family members, leading to phosphorylation at Tyr-576, Tyr-577 and at additional tyrosine residues. FGR promotes phosphorylation at Tyr-397 and Tyr-576. FER promotes phosphorylation at Tyr-577, Tyr-861 and Tyr-925, even when cells are not adherent. Tyr-397, Tyr-576 and Ser-722 are phosphorylated only when cells are adherent. Phosphorylation at Tyr-397 is important for interaction with BMX, PIK3R1 and SHC1. Phosphorylation at Tyr-925 is important for interaction with GRB2. Dephosphorylated by PTPN11; PTPN11 is recruited to PTK2 via EPHA2 (tyrosine phosphorylated). Microtubule-induced dephosphorylation at Tyr-397 is crucial for the induction of focal adhesion disassembly; this dephosphorylation could be catalyzed by PTPN11 and regulated by ZFYVE21. Phosphorylation on tyrosine residues is enhanced by NTN1. In terms of processing, sumoylated; this enhances autophosphorylation. Detected in B and T-lymphocytes. Isoform 1 and isoform 6 are detected in lung fibroblasts (at protein level). Ubiquitous. Expressed in epithelial cells (at protein level).

The protein resides in the cell junction. The protein localises to the focal adhesion. It localises to the cell membrane. Its subcellular location is the cytoplasm. It is found in the perinuclear region. The protein resides in the cell cortex. The protein localises to the cytoskeleton. It localises to the microtubule organizing center. Its subcellular location is the centrosome. It is found in the nucleus. The protein resides in the cilium basal body. It catalyses the reaction L-tyrosyl-[protein] + ATP = O-phospho-L-tyrosyl-[protein] + ADP + H(+). Its activity is regulated as follows. Subject to autoinhibition, mediated by interactions between the FERM domain and the kinase domain. Activated by autophosphorylation at Tyr-397. This promotes interaction with SRC and phosphorylation at Tyr-576 and Tyr-577 in the kinase activation loop. Phosphorylation at Tyr-576 and Tyr-577 is required for maximal kinase activity. Inhibited by TAC544, TAE226, PF-573,228 and PF-562,271. Non-receptor protein-tyrosine kinase that plays an essential role in regulating cell migration, adhesion, spreading, reorganization of the actin cytoskeleton, formation and disassembly of focal adhesions and cell protrusions, cell cycle progression, cell proliferation and apoptosis. Required for early embryonic development and placenta development. Required for embryonic angiogenesis, normal cardiomyocyte migration and proliferation, and normal heart development. Regulates axon growth and neuronal cell migration, axon branching and synapse formation; required for normal development of the nervous system. Plays a role in osteogenesis and differentiation of osteoblasts. Functions in integrin signal transduction, but also in signaling downstream of numerous growth factor receptors, G-protein coupled receptors (GPCR), EPHA2, netrin receptors and LDL receptors. Forms multisubunit signaling complexes with SRC and SRC family members upon activation; this leads to the phosphorylation of additional tyrosine residues, creating binding sites for scaffold proteins, effectors and substrates. Regulates numerous signaling pathways. Promotes activation of phosphatidylinositol 3-kinase and the AKT1 signaling cascade. Promotes activation of MAPK1/ERK2, MAPK3/ERK1 and the MAP kinase signaling cascade. Promotes localized and transient activation of guanine nucleotide exchange factors (GEFs) and GTPase-activating proteins (GAPs), and thereby modulates the activity of Rho family GTPases. Signaling via CAS family members mediates activation of RAC1. Phosphorylates NEDD9 following integrin stimulation. Recruits the ubiquitin ligase MDM2 to P53/TP53 in the nucleus, and thereby regulates P53/TP53 activity, P53/TP53 ubiquitination and proteasomal degradation. Phosphorylates SRC; this increases SRC kinase activity. Phosphorylates ACTN1, ARHGEF7, GRB7, RET and WASL. Promotes phosphorylation of PXN and STAT1; most likely PXN and STAT1 are phosphorylated by a SRC family kinase that is recruited to autophosphorylated PTK2/FAK1, rather than by PTK2/FAK1 itself. Promotes phosphorylation of BCAR1; GIT2 and SHC1; this requires both SRC and PTK2/FAK1. Promotes phosphorylation of BMX and PIK3R1. Isoform 6 (FRNK) does not contain a kinase domain and inhibits PTK2/FAK1 phosphorylation and signaling. Its enhanced expression can attenuate the nuclear accumulation of LPXN and limit its ability to enhance serum response factor (SRF)-dependent gene transcription. In terms of biological role, isoform 6 (FRNK) does not contain a kinase domain and inhibits PTK2/FAK1 phosphorylation and signaling. Its enhanced expression can attenuate the nuclear accumulation of LPXN and limit its ability to enhance serum response factor (SRF)-dependent gene transcription. The chain is Focal adhesion kinase 1 from Homo sapiens (Human).